Consider the following 201-residue polypeptide: Peptide deformylase (201 aa).

Positions 1-34 (MSLNFAAMARQSERQASTVMVPKGEEQPESPKIH) are disordered. A compositionally biased stretch (basic and acidic residues) spans 23–32 (KGEEQPESPK). Positions 121 and 163 each coordinate Fe cation. E164 is a catalytic residue. H167 lines the Fe cation pocket.

The protein belongs to the polypeptide deformylase family. Fe(2+) is required as a cofactor.

It catalyses the reaction N-terminal N-formyl-L-methionyl-[peptide] + H2O = N-terminal L-methionyl-[peptide] + formate. Its function is as follows. Removes the formyl group from the N-terminal Met of newly synthesized proteins. Requires at least a dipeptide for an efficient rate of reaction. N-terminal L-methionine is a prerequisite for activity but the enzyme has broad specificity at other positions. The sequence is that of Peptide deformylase from Synechococcus sp. (strain RCC307).